Reading from the N-terminus, the 292-residue chain is 4-hydroxy-tetrahydrodipicolinate synthase (292 aa).

Thr-45 is a pyruvate binding site. Catalysis depends on Tyr-133, which acts as the Proton donor/acceptor. Lys-161 serves as the catalytic Schiff-base intermediate with substrate. Residue Ile-203 participates in pyruvate binding.

Belongs to the DapA family. Homotetramer; dimer of dimers.

It is found in the cytoplasm. It catalyses the reaction L-aspartate 4-semialdehyde + pyruvate = (2S,4S)-4-hydroxy-2,3,4,5-tetrahydrodipicolinate + H2O + H(+). The protein operates within amino-acid biosynthesis; L-lysine biosynthesis via DAP pathway; (S)-tetrahydrodipicolinate from L-aspartate: step 3/4. Functionally, catalyzes the condensation of (S)-aspartate-beta-semialdehyde [(S)-ASA] and pyruvate to 4-hydroxy-tetrahydrodipicolinate (HTPA). The chain is 4-hydroxy-tetrahydrodipicolinate synthase from Azoarcus sp. (strain BH72).